A 481-amino-acid chain; its full sequence is Glutamate--tRNA ligase (481 aa).

The short motif at 9-19 is the 'HIGH' region element; it reads PSPTGNLHIGT. The 'KMSKS' region motif lies at 249–253; that stretch reads KLSKR. Lys252 provides a ligand contact to ATP.

Belongs to the class-I aminoacyl-tRNA synthetase family. Glutamate--tRNA ligase type 1 subfamily. As to quaternary structure, monomer.

The protein localises to the cytoplasm. The enzyme catalyses tRNA(Glu) + L-glutamate + ATP = L-glutamyl-tRNA(Glu) + AMP + diphosphate. Its function is as follows. Catalyzes the attachment of glutamate to tRNA(Glu) in a two-step reaction: glutamate is first activated by ATP to form Glu-AMP and then transferred to the acceptor end of tRNA(Glu). The polypeptide is Glutamate--tRNA ligase (Picosynechococcus sp. (strain ATCC 27264 / PCC 7002 / PR-6) (Agmenellum quadruplicatum)).